The primary structure comprises 188 residues: Phosphoribosylglycinamide formyltransferase (188 aa).

12–14 provides a ligand contact to N(1)-(5-phospho-beta-D-ribosyl)glycinamide; sequence GSN. (6R)-10-formyltetrahydrofolate contacts are provided by residues Lys-66, 91–94, and Asn-108; that span reads MRLV. Catalysis depends on His-110, which acts as the Proton donor.

Belongs to the GART family.

The catalysed reaction is N(1)-(5-phospho-beta-D-ribosyl)glycinamide + (6R)-10-formyltetrahydrofolate = N(2)-formyl-N(1)-(5-phospho-beta-D-ribosyl)glycinamide + (6S)-5,6,7,8-tetrahydrofolate + H(+). It functions in the pathway purine metabolism; IMP biosynthesis via de novo pathway; N(2)-formyl-N(1)-(5-phospho-D-ribosyl)glycinamide from N(1)-(5-phospho-D-ribosyl)glycinamide (10-formyl THF route): step 1/1. Functionally, catalyzes the transfer of a formyl group from 10-formyltetrahydrofolate to 5-phospho-ribosyl-glycinamide (GAR), producing 5-phospho-ribosyl-N-formylglycinamide (FGAR) and tetrahydrofolate. This Staphylococcus epidermidis (strain ATCC 35984 / DSM 28319 / BCRC 17069 / CCUG 31568 / BM 3577 / RP62A) protein is Phosphoribosylglycinamide formyltransferase.